A 202-amino-acid polypeptide reads, in one-letter code: Sterile alpha motif domain-containing protein 10 (202 aa).

Positions 118-184 (WSQQDVCKWL…LQQVLRLQVR (67 aa)) constitute an SAM domain.

The sequence is that of Sterile alpha motif domain-containing protein 10 (SAMD10) from Homo sapiens (Human).